The chain runs to 409 residues: Elongation factor Tu (409 aa).

Residues 10–214 enclose the tr-type G domain; it reads KPHVNIGTIG…AVDSYIPTPE (205 aa). Residues 19–26 are G1; it reads GHVDHGKT. 19–26 is a GTP binding site; that stretch reads GHVDHGKT. Mg(2+) is bound at residue Thr-26. The G2 stretch occupies residues 60-64; it reads GITIN. Residues 81-84 are G3; it reads DCPG. Residues 81 to 85 and 136 to 139 each bind GTP; these read DCPGH and NKKD. Residues 136-139 are G4; it reads NKKD. The tract at residues 174–176 is G5; that stretch reads SAK.

This sequence belongs to the TRAFAC class translation factor GTPase superfamily. Classic translation factor GTPase family. EF-Tu/EF-1A subfamily. In terms of assembly, monomer.

The protein resides in the cytoplasm. The enzyme catalyses GTP + H2O = GDP + phosphate + H(+). GTP hydrolase that promotes the GTP-dependent binding of aminoacyl-tRNA to the A-site of ribosomes during protein biosynthesis. The polypeptide is Elongation factor Tu (Microcystis aeruginosa (strain NIES-843 / IAM M-2473)).